The chain runs to 406 residues: MTSTKVEDRVTAAVLGAIGHALALTASMTWEILWALILGFALSAVVQAVVRRSTIVTLLGDDRPRTLVIATGLGAASSSCSYAAVALARSLFRKGANFTAAMAFEIGSTNLVVELGIILALLMGWQFTAAEFVGGPIMILVLAVLFRLFVGARLIDAAREQAERGLAGSMEGHAAMDMSIKREGSFWRRLLSPPGFTSIAHVFVMEWLAILRDLILGLLIAGAIAAWVPESFWQSFFLANHPAWSAVWGPIIGPIVAIVSFVCSIGNVPLAAVLWNGGISFGGVIAFIFADLLILPILNIYRKYYGARMMLVLLGTFYASMVVAGYLIELLFGTTNLIPSQRSATVMTAEISWNYTTWLNVIFLVIAAALVVRFITSGGLPMLRMMGGSPDAPHDHHDRHDDHLGH.

9 helical membrane passes run 30–50 (WEILWALILGFALSAVVQAVV), 67–87 (LVIATGLGAASSSCSYAAVAL), 111–131 (LVVELGIILALLMGWQFTAAE), 132–152 (FVGGPIMILVLAVLFRLFVGA), 208–228 (LAILRDLILGLLIAGAIAAWV), 246–266 (AVWGPIIGPIVAIVSFVCSIG), 278–298 (GISFGGVIAFIFADLLILPIL), 312–332 (VLLGTFYASMVVAGYLIELLF), and 361–381 (VIFLVIAAALVVRFITSGGLP).

It belongs to the UPF0718 family.

Its subcellular location is the cell membrane. This Mycobacterium tuberculosis (strain ATCC 25618 / H37Rv) protein is Putative permease Rv2963.